The sequence spans 366 residues: DNA polymerase processivity factor (366 aa).

The segment covering 1-16 has biased composition (basic residues); it reads MERGSRDHHRDHRDHR. 2 disordered regions span residues 1–25 and 286–366; these read MERG…REPP and ESRF…RCVV. Residues 286–308 show a composition bias toward basic and acidic residues; that stretch reads ESRFERMGKQDDGKGDRNHKNED. 2 stretches are compositionally biased toward polar residues: residues 313–322 and 330–339; these read ASKQETQYKI and KNGTAGSSLF.

This sequence belongs to the herpesviridae polymerase accessory protein family.

Its function is as follows. Accessory subunit of the DNA polymerase that acts to increase the processivity of polymerization. In Homo sapiens (Human), this protein is DNA polymerase processivity factor (U27).